Consider the following 86-residue polypeptide: DNA-directed RNA polymerase subunit Rpo11 (86 aa).

This sequence belongs to the archaeal Rpo11/eukaryotic RPB11/RPC19 RNA polymerase subunit family. In terms of assembly, part of the RNA polymerase complex.

The protein localises to the cytoplasm. It catalyses the reaction RNA(n) + a ribonucleoside 5'-triphosphate = RNA(n+1) + diphosphate. Its function is as follows. DNA-dependent RNA polymerase (RNAP) catalyzes the transcription of DNA into RNA using the four ribonucleoside triphosphates as substrates. The chain is DNA-directed RNA polymerase subunit Rpo11 from Archaeoglobus fulgidus (strain ATCC 49558 / DSM 4304 / JCM 9628 / NBRC 100126 / VC-16).